Here is a 179-residue protein sequence, read N- to C-terminus: MAELATIARPYAEALFRVAEGGDISAWSTLVQELAQVAQLPEVLSVASSPKVSRTQVAELLLAALKSPLASGAQAKNFVQMLVDNHRIALLPEIAVQFEALKNAREGAADVQIVSAFPLEGAQLAELVTSLERKFKRKLKPAVEVDSSLIGGVRVTVGDEVLDTSVRARLAGMQAALTA.

The protein belongs to the ATPase delta chain family. In terms of assembly, F-type ATPases have 2 components, F(1) - the catalytic core - and F(0) - the membrane proton channel. F(1) has five subunits: alpha(3), beta(3), gamma(1), delta(1), epsilon(1). F(0) has three main subunits: a(1), b(2) and c(10-14). The alpha and beta chains form an alternating ring which encloses part of the gamma chain. F(1) is attached to F(0) by a central stalk formed by the gamma and epsilon chains, while a peripheral stalk is formed by the delta and b chains.

It localises to the cell inner membrane. Functionally, f(1)F(0) ATP synthase produces ATP from ADP in the presence of a proton or sodium gradient. F-type ATPases consist of two structural domains, F(1) containing the extramembraneous catalytic core and F(0) containing the membrane proton channel, linked together by a central stalk and a peripheral stalk. During catalysis, ATP synthesis in the catalytic domain of F(1) is coupled via a rotary mechanism of the central stalk subunits to proton translocation. Its function is as follows. This protein is part of the stalk that links CF(0) to CF(1). It either transmits conformational changes from CF(0) to CF(1) or is implicated in proton conduction. The chain is ATP synthase subunit delta from Burkholderia mallei (strain NCTC 10247).